Here is a 203-residue protein sequence, read N- to C-terminus: Serine hydrolase-like protein (203 aa).

Residues 33-145 (PPVLCLHGWL…FLLESDEMEN (113 aa)) enclose the AB hydrolase-1 domain. The active site involves serine 108.

Belongs to the AB hydrolase superfamily.

Putative serine hydrolase. The sequence is that of Serine hydrolase-like protein (SERHL) from Homo sapiens (Human).